Reading from the N-terminus, the 139-residue chain is MKVLVTGGSGYIGSHTCVQLLQRGHEVVILDNLCNSKRRILPVIERLGGKEATFIEGDIRNEARMTEILHDHAIEAVIHFAGLKAVGESVAKPLEYYDNNVTGTLKLVSAMRAAGVKNFIFSSSATVYGDQPKIPYVES.

NAD(+) is bound by residues 11 to 12 (YI), 31 to 36 (DNLCNS), 58 to 59 (DI), 80 to 84 (FAGLK), asparagine 99, and serine 124. Substrate is bound at residue serine 124. Catalysis depends on tyrosine 136, which acts as the Proton acceptor.

Belongs to the NAD(P)-dependent epimerase/dehydratase family. Homodimer. The cofactor is NAD(+).

It catalyses the reaction UDP-alpha-D-glucose = UDP-alpha-D-galactose. It functions in the pathway carbohydrate metabolism; galactose metabolism. Functionally, involved in the metabolism of galactose. Catalyzes the conversion of UDP-galactose (UDP-Gal) to UDP-glucose (UDP-Glc) through a mechanism involving the transient reduction of NAD. The chain is UDP-glucose 4-epimerase (galE) from Klebsiella pneumoniae.